A 454-amino-acid polypeptide reads, in one-letter code: Butyrophilin-like protein 2 (454 aa).

Residues 1-6 lie on the Cytoplasmic side of the membrane; it reads MVDCPR. Residues 7–23 form a helical; Signal-anchor for type II membrane protein membrane-spanning segment; sequence YSLSGVAASFLFVLLTI. The Extracellular portion of the chain corresponds to 24–454; that stretch reads KHPDDFRVVG…KTARFPLSGW (431 aa). 4 consecutive Ig-like V-type domains span residues 27-140, 148-234, 244-355, and 365-452; these read DDFR…VLLQ, PNIH…ATIA, ASVS…ARVD, and PRIT…FPLS. 4 cysteine pairs are disulfide-bonded: Cys-50/Cys-124, Cys-164/Cys-218, Cys-267/Cys-341, and Cys-381/Cys-435. 4 N-linked (GlcNAc...) asparagine glycosylation sites follow: Asn-210, Asn-296, Asn-427, and Asn-432.

This sequence belongs to the immunoglobulin superfamily. BTN/MOG family. Highly expressed in intestine and at reduced levels in lung and stomach. Also expressed in thymus, spleen, lymph nodes, T-cells, B-cells, and macrophages.

The protein localises to the membrane. Its function is as follows. Negative regulator of T-cell proliferation. This Mus musculus (Mouse) protein is Butyrophilin-like protein 2.